The following is a 502-amino-acid chain: Lysine--tRNA ligase (502 aa).

Mg(2+) contacts are provided by E398 and E405.

This sequence belongs to the class-II aminoacyl-tRNA synthetase family. Homodimer. It depends on Mg(2+) as a cofactor.

The protein resides in the cytoplasm. The enzyme catalyses tRNA(Lys) + L-lysine + ATP = L-lysyl-tRNA(Lys) + AMP + diphosphate. This chain is Lysine--tRNA ligase, found in Thermosipho melanesiensis (strain DSM 12029 / CIP 104789 / BI429).